The chain runs to 391 residues: Formate-dependent phosphoribosylglycinamide formyltransferase (391 aa).

Residues E20–L21 and E80 contribute to the N(1)-(5-phospho-beta-D-ribosyl)glycinamide site. ATP contacts are provided by residues R112, K153, S158–Q163, E193–I196, and E201. Residues R117–L306 enclose the ATP-grasp domain. Mg(2+)-binding residues include E265 and E277. Residues D284, K354, and R361–R362 each bind N(1)-(5-phospho-beta-D-ribosyl)glycinamide.

This sequence belongs to the PurK/PurT family. As to quaternary structure, homodimer.

The enzyme catalyses N(1)-(5-phospho-beta-D-ribosyl)glycinamide + formate + ATP = N(2)-formyl-N(1)-(5-phospho-beta-D-ribosyl)glycinamide + ADP + phosphate + H(+). It functions in the pathway purine metabolism; IMP biosynthesis via de novo pathway; N(2)-formyl-N(1)-(5-phospho-D-ribosyl)glycinamide from N(1)-(5-phospho-D-ribosyl)glycinamide (formate route): step 1/1. In terms of biological role, involved in the de novo purine biosynthesis. Catalyzes the transfer of formate to 5-phospho-ribosyl-glycinamide (GAR), producing 5-phospho-ribosyl-N-formylglycinamide (FGAR). Formate is provided by PurU via hydrolysis of 10-formyl-tetrahydrofolate. The chain is Formate-dependent phosphoribosylglycinamide formyltransferase from Shewanella sp. (strain MR-7).